We begin with the raw amino-acid sequence, 251 residues long: tRNA-cytidine(32) 2-sulfurtransferase 2 (251 aa).

The short motif at 33–38 (SGGKDS) is the PP-loop motif element. 3 residues coordinate [4Fe-4S] cluster: Cys108, Cys111, and Cys199.

This sequence belongs to the TtcA family. As to quaternary structure, homodimer. Mg(2+) is required as a cofactor. The cofactor is [4Fe-4S] cluster.

It localises to the cytoplasm. The catalysed reaction is cytidine(32) in tRNA + S-sulfanyl-L-cysteinyl-[cysteine desulfurase] + AH2 + ATP = 2-thiocytidine(32) in tRNA + L-cysteinyl-[cysteine desulfurase] + A + AMP + diphosphate + H(+). Its pathway is tRNA modification. Its function is as follows. Catalyzes the ATP-dependent 2-thiolation of cytidine in position 32 of tRNA, to form 2-thiocytidine (s(2)C32). The sulfur atoms are provided by the cysteine/cysteine desulfurase (IscS) system. This is tRNA-cytidine(32) 2-sulfurtransferase 2 from Francisella tularensis subsp. tularensis (strain FSC 198).